A 200-amino-acid chain; its full sequence is Protein GrpE (200 aa).

Polar residues predominate over residues 1-11 (MSNQTNKAQDN). The disordered stretch occupies residues 1–29 (MSNQTNKAQDNQVEEIVEGELLNENGTEA).

Belongs to the GrpE family. Homodimer.

Its subcellular location is the cytoplasm. Its function is as follows. Participates actively in the response to hyperosmotic and heat shock by preventing the aggregation of stress-denatured proteins, in association with DnaK and GrpE. It is the nucleotide exchange factor for DnaK and may function as a thermosensor. Unfolded proteins bind initially to DnaJ; upon interaction with the DnaJ-bound protein, DnaK hydrolyzes its bound ATP, resulting in the formation of a stable complex. GrpE releases ADP from DnaK; ATP binding to DnaK triggers the release of the substrate protein, thus completing the reaction cycle. Several rounds of ATP-dependent interactions between DnaJ, DnaK and GrpE are required for fully efficient folding. This chain is Protein GrpE, found in Shewanella halifaxensis (strain HAW-EB4).